A 134-amino-acid chain; its full sequence is Putative STAG3-like protein 2 (134 aa).

Positions 10–95 (PKVTCRDVLP…GRFKDWMVSM (86 aa)) constitute an SCD domain.

It belongs to the SCC3 family.

The protein resides in the nucleus. This chain is Putative STAG3-like protein 2 (STAG3L2), found in Homo sapiens (Human).